The sequence spans 118 residues: Large ribosomal subunit protein bL20 (118 aa).

It belongs to the bacterial ribosomal protein bL20 family.

In terms of biological role, binds directly to 23S ribosomal RNA and is necessary for the in vitro assembly process of the 50S ribosomal subunit. It is not involved in the protein synthesizing functions of that subunit. The polypeptide is Large ribosomal subunit protein bL20 (Buchnera aphidicola subsp. Acyrthosiphon pisum (strain 5A)).